A 144-amino-acid chain; its full sequence is uncharacterized protein (144 aa).

4 helical membrane passes run 16 to 36 (FLIF…GAIF), 48 to 68 (GFIV…ALII), 87 to 107 (LLPE…LVLL), and 120 to 140 (VMSL…WYFG).

Its subcellular location is the cell membrane. This is an uncharacterized protein from Methanocaldococcus jannaschii (strain ATCC 43067 / DSM 2661 / JAL-1 / JCM 10045 / NBRC 100440) (Methanococcus jannaschii).